The primary structure comprises 222 residues: uncharacterized protein (222 aa).

This is an uncharacterized protein from Fowlpox virus (strain NVSL) (FPV).